A 33-amino-acid chain; its full sequence is Cytochrome b6-f complex subunit 8 (33 aa).

A helical transmembrane segment spans residues 2 to 22 (LFTIAWASLAAVFSFSIAMVV).

It belongs to the PetN family. As to quaternary structure, the 4 large subunits of the cytochrome b6-f complex are cytochrome b6, subunit IV (17 kDa polypeptide, PetD), cytochrome f and the Rieske protein, while the 4 small subunits are PetG, PetL, PetM and PetN. The complex functions as a dimer.

It is found in the cellular thylakoid membrane. Its function is as follows. Component of the cytochrome b6-f complex, which mediates electron transfer between photosystem II (PSII) and photosystem I (PSI), cyclic electron flow around PSI, and state transitions. The sequence is that of Cytochrome b6-f complex subunit 8 from Synechococcus sp. (strain CC9311).